The following is a 611-amino-acid chain: MPAYRSRTTTHGRNMAGARGLWRATGMKDSDFGKPIIAVVNSFTQFVPGHVHLKDLGQLVAREIEAAGGVAKEFNTIAVDDGIAMGHDGMLYSLPSREIIADSVEYMVNAHCADAMVCISNCDKITPGMLNAAMRLNIPAVFVSGGPMEAGKVVLHGKTVALDLVDAMVAAADDKISDEDVKIIERSACPTCGSCSGMFTANSMNCLTEALGLSLPGNGSTLATHSDRKRLFVEAGHLIVDLARRYYEQDDETVLPRTIANKAAFENAMSLDIAMGGSTNTVLHILAAAHEGGVDFGMEDIDRLSRKVPCLSKVAPAKQDVHMEDVHRAGGIMRILGELERGGLINRDTYTVHEATLGDAIDRWDITRTNSEMVRQFFKAAPGGVPTQVAFSQSSRWDDLDTDSDNGVIRSVEKPFSKDGGLAVLYGNIALDGCIVKTAGVDESILKFNGSAVVYESQDAAVKGILGNEVKAGDVVVIRYEGPKGGPGMQEMLYPTSYLKSKGLGKACALITDGRFSGGTSGLSIGHASPEAAQGGAIGLVRQGDLIEIDIPNRTINLKVSDAELAARRAEQEEKGWKPEAPRKRNVTTALKAYAAFASSADKGAVRILPE.

Position 81 (D81) interacts with Mg(2+). Position 122 (C122) interacts with [2Fe-2S] cluster. Mg(2+)-binding residues include D123 and K124. Position 124 is an N6-carboxylysine (K124). Residue C195 participates in [2Fe-2S] cluster binding. E491 lines the Mg(2+) pocket. Catalysis depends on S517, which acts as the Proton acceptor.

The protein belongs to the IlvD/Edd family. As to quaternary structure, homodimer. Requires [2Fe-2S] cluster as cofactor. The cofactor is Mg(2+).

The catalysed reaction is (2R)-2,3-dihydroxy-3-methylbutanoate = 3-methyl-2-oxobutanoate + H2O. The enzyme catalyses (2R,3R)-2,3-dihydroxy-3-methylpentanoate = (S)-3-methyl-2-oxopentanoate + H2O. It participates in amino-acid biosynthesis; L-isoleucine biosynthesis; L-isoleucine from 2-oxobutanoate: step 3/4. Its pathway is amino-acid biosynthesis; L-valine biosynthesis; L-valine from pyruvate: step 3/4. In terms of biological role, functions in the biosynthesis of branched-chain amino acids. Catalyzes the dehydration of (2R,3R)-2,3-dihydroxy-3-methylpentanoate (2,3-dihydroxy-3-methylvalerate) into 2-oxo-3-methylpentanoate (2-oxo-3-methylvalerate) and of (2R)-2,3-dihydroxy-3-methylbutanoate (2,3-dihydroxyisovalerate) into 2-oxo-3-methylbutanoate (2-oxoisovalerate), the penultimate precursor to L-isoleucine and L-valine, respectively. The chain is Dihydroxy-acid dehydratase from Agrobacterium fabrum (strain C58 / ATCC 33970) (Agrobacterium tumefaciens (strain C58)).